Here is a 456-residue protein sequence, read N- to C-terminus: Antigen Lp49 (456 aa).

The N-terminal stretch at 1 to 34 (MNSNPKKKFLKLIKIKSDIILLIPIFLFLVCCKS) is a signal peptide. Cys-346 and Cys-347 are oxidised to a cystine.

It is found in the cell outer membrane. May be involved in virulence. Binds human plasminogen (PLG) and stimulates its proteolytic cleavage to enzymatically active plasmin in the presence of an urokinase-type PLG activator in vitro. Activated plasmin has proteolytic activity which may help the bacteria to spread throughout the host by degrading extracellular matrix components, facilitating tissue penetration and invasion. In Leptospira interrogans serogroup Icterohaemorrhagiae serovar copenhageni (strain Fiocruz L1-130), this protein is Antigen Lp49.